The chain runs to 494 residues: Amidophosphoribosyltransferase (494 aa).

Positions 1–10 are excised as a propeptide; the sequence is MFNYSGLNEE. The active-site Nucleophile is the Cys-11. A Glutamine amidotransferase type-2 domain is found at 11–231; sequence CGVFGIWNHP…AGEYVVINDK (221 aa). Residues Ser-294, Asp-356, and Asp-357 each coordinate Mg(2+).

The protein in the C-terminal section; belongs to the purine/pyrimidine phosphoribosyltransferase family. Requires Mg(2+) as cofactor.

It catalyses the reaction 5-phospho-beta-D-ribosylamine + L-glutamate + diphosphate = 5-phospho-alpha-D-ribose 1-diphosphate + L-glutamine + H2O. Its pathway is purine metabolism; IMP biosynthesis via de novo pathway; N(1)-(5-phospho-D-ribosyl)glycinamide from 5-phospho-alpha-D-ribose 1-diphosphate: step 1/2. Its function is as follows. Catalyzes the formation of phosphoribosylamine from phosphoribosylpyrophosphate (PRPP) and glutamine. This is Amidophosphoribosyltransferase from Staphylococcus aureus (strain MRSA252).